The chain runs to 203 residues: A-type ATP synthase subunit E (203 aa).

The protein belongs to the V-ATPase E subunit family. As to quaternary structure, has multiple subunits with at least A(3), B(3), C, D, E, F, H, I and proteolipid K(x).

It localises to the cell membrane. Its function is as follows. Component of the A-type ATP synthase that produces ATP from ADP in the presence of a proton gradient across the membrane. This chain is A-type ATP synthase subunit E, found in Methanococcus aeolicus (strain ATCC BAA-1280 / DSM 17508 / OCM 812 / Nankai-3).